The primary structure comprises 430 residues: Histone acetyltransferase type B subunit 2 (430 aa).

5 WD repeats span residues 129 to 169, 180 to 220, 233 to 273, 279 to 319, and 323 to 363; these read PHDG…ALTT, GHTA…FTSS, RHTD…EEEA, AHSK…QRLH, and GHED…EEQT. Positions 365 to 369 are interaction with the histone H4 N-terminus; it reads EDAED. The stretch at 380–420 is one WD 6 repeat; the sequence is GHTNRISEFSWCPNERWVVGSLADDNILQIWSPSRVIWGRD. Residue serine 425 is modified to Phosphoserine.

The protein belongs to the WD repeat RBAP46/RBAP48/MSI1 family. Component of the HAT-B complex composed of at least hat1 and hat2. The HAT-B complex binds to histone H4 tail. Component of the CENP-A recruiting complex composed of at least mis16, mis19, mis19 and mis20.

It localises to the cytoplasm. It is found in the nucleus. Its subcellular location is the chromosome. The protein resides in the centromere. The protein localises to the kinetochore. In terms of biological role, regulatory subunit of the histone acetylase B (HAT-B) complex. The complex acetylates 'Lys-12' of histone H4 which is required for telomeric silencing. Component of the CENP-A recruiting complex that ensures the integrity of mitotic spindles through maintenance of kinetochore factors mis6/CENP-I and cnp1/CENP-A. Maintains the deacetylated state of histones specifically in the central core of the centromeres. This Schizosaccharomyces pombe (strain 972 / ATCC 24843) (Fission yeast) protein is Histone acetyltransferase type B subunit 2 (mis16).